The sequence spans 400 residues: Nicotinate phosphoribosyltransferase (400 aa).

Position 220 is a phosphohistidine; by autocatalysis (His-220).

Belongs to the NAPRTase family. Transiently phosphorylated on a His residue during the reaction cycle. Phosphorylation strongly increases the affinity for substrates and increases the rate of nicotinate D-ribonucleotide production. Dephosphorylation regenerates the low-affinity form of the enzyme, leading to product release.

The enzyme catalyses nicotinate + 5-phospho-alpha-D-ribose 1-diphosphate + ATP + H2O = nicotinate beta-D-ribonucleotide + ADP + phosphate + diphosphate. Its pathway is cofactor biosynthesis; NAD(+) biosynthesis; nicotinate D-ribonucleotide from nicotinate: step 1/1. Catalyzes the synthesis of beta-nicotinate D-ribonucleotide from nicotinate and 5-phospho-D-ribose 1-phosphate at the expense of ATP. In Shigella boydii serotype 18 (strain CDC 3083-94 / BS512), this protein is Nicotinate phosphoribosyltransferase.